We begin with the raw amino-acid sequence, 346 residues long: Autophagy-related protein 3 (346 aa).

Residues 85–161 are flexible region; it reads DFAGDAGHEE…DDDDEAIIRA (77 aa). Cysteine 238 (glycyl thioester intermediate) is an active-site residue. A handle region region spans residues 242 to 322; the sequence is SVMKTLLDRA…DQEVAIRVDQ (81 aa).

This sequence belongs to the ATG3 family. In terms of assembly, monomer. Interacts with apg-6/atg8 through an intermediate thioester bond through the C-terminal Gly of apg-6/atg8. Also interacts with the 40 amino acid C-terminal region of the E1-like apg-5/atg7 enzyme. Also interacts with the atg12-apg-4/atg5 conjugate.

The protein localises to the cytoplasm. In terms of biological role, E2 conjugating enzyme required for the cytoplasm to vacuole transport (Cvt) and autophagy. Required for selective autophagic degradation of the nucleus (nucleophagy) as well as for mitophagy which contributes to regulate mitochondrial quantity and quality by eliminating the mitochondria to a basal level to fulfill cellular energy requirements and preventing excess ROS production. Responsible for the E2-like covalent binding of phosphatidylethanolamine to the C-terminal Gly of apg-6/atg8. The atg12-apg-4/atg5 conjugate plays a role of an E3 and promotes the transfer of apg-6/atg8 from apg-3/atg3 to phosphatidylethanolamine (PE). This step is required for the membrane association of apg-6/atg8. The formation of the apg-6/atg8-phosphatidylethanolamine conjugate is essential for autophagy and for the cytoplasm to vacuole transport (Cvt). The apg-6/atg8-PE conjugate mediates tethering between adjacent membranes and stimulates membrane hemifusion, leading to expansion of the autophagosomal membrane during autophagy. The protein is Autophagy-related protein 3 (apg-3) of Neurospora crassa (strain ATCC 24698 / 74-OR23-1A / CBS 708.71 / DSM 1257 / FGSC 987).